The primary structure comprises 33 residues: Protamine TP14 (33 aa).

Residues 1 to 33 (MPRRRRSSRPPVRRRRRPRVSRRRRRRGGRRRR) form a disordered region.

Testis.

It is found in the nucleus. Its subcellular location is the chromosome. Functionally, protamines substitute for histones in the chromatin of sperm during the haploid phase of spermatogenesis. They compact sperm DNA into a highly condensed, stable and inactive complex. The polypeptide is Protamine TP14 (Oncorhynchus mykiss (Rainbow trout)).